The sequence spans 745 residues: Polyribonucleotide nucleotidyltransferase (745 aa).

The Mg(2+) site is built by Asp-487 and Asp-493. The region spanning 554–613 (PRIETMQIPTDKIRDVIGTGGKIIREIVEKTGAKINIEDTGIVKIASSDGKAIKAAYNWI) is the KH domain. The S1 motif domain occupies 623-691 (GTIYDGTIVK…ERGKIRLSMK (69 aa)). A disordered region spans residues 695–745 (QETGEDLTEKLKAERAERGEPEREERSDRGDRGDRGPRRDRGERRRESSGE). A compositionally biased stretch (basic and acidic residues) spans 701-745 (LTEKLKAERAERGEPEREERSDRGDRGDRGPRRDRGERRRESSGE).

The protein belongs to the polyribonucleotide nucleotidyltransferase family. It depends on Mg(2+) as a cofactor.

It is found in the cytoplasm. The catalysed reaction is RNA(n+1) + phosphate = RNA(n) + a ribonucleoside 5'-diphosphate. Functionally, involved in mRNA degradation. Catalyzes the phosphorolysis of single-stranded polyribonucleotides processively in the 3'- to 5'-direction. This is Polyribonucleotide nucleotidyltransferase from Methylorubrum extorquens (strain CM4 / NCIMB 13688) (Methylobacterium extorquens).